The chain runs to 131 residues: Antileukoproteinase (131 aa).

A signal peptide spans Met1–Gly25. 2 WAP domains span residues Asp29–Val77 and Val83–Met131. Intrachain disulfides connect Cys36/Cys65, Cys44/Cys69, Cys52/Cys64, Cys58/Cys73, Cys90/Cys119, Cys97/Cys123, Cys106/Cys118, and Cys112/Cys127. Residues Arg85 to Met131 form an elastase inhibitory domain region.

In terms of assembly, interacts with GRN; interaction protects progranulin from proteolysis. As to expression, detected in bronchial epithelial cells. Detected in bronchoalveolar fluid after infection with M.tuberculosis (at protein level). Highest expression in lung, spleen, intestine and epididymis with lower levels in liver and seminal vesicle. No expression in brain, heart, kidney and muscle.

It localises to the secreted. Acid-stable proteinase inhibitor with strong affinities for trypsin, chymotrypsin, elastase, and cathepsin G. Modulates the innate immune response after bacterial infection. Contributes to regulate the inflammatory and immune responses to the intracellular parasite L.major. Down-regulates responses to bacterial lipopolysaccharide (LPS). Plays a role in regulating the activation of NF-kappa-B and inflammatory responses. Has antimicrobial activity against mycobacteria, but not against salmonella. Contributes to normal resistance against infection by M.tuberculosis. Required for normal resistance to L.major. Required for normal wound healing, probably by preventing tissue damage by limiting protease activity. Together with ELANE, required for normal differentiation and proliferation of bone marrow myeloid cells. The chain is Antileukoproteinase (Slpi) from Mus musculus (Mouse).